The following is a 123-amino-acid chain: Small ribosomal subunit protein bS16 (123 aa).

The segment at 87 to 123 (VKNNPVKAKPGKRAQERAAEKAQKVADAAAAAADAAE) is disordered. Residues 99 to 110 (RAQERAAEKAQK) are compositionally biased toward basic and acidic residues. Residues 111-123 (VADAAAAAADAAE) are compositionally biased toward low complexity.

Belongs to the bacterial ribosomal protein bS16 family.

This Rhizobium johnstonii (strain DSM 114642 / LMG 32736 / 3841) (Rhizobium leguminosarum bv. viciae) protein is Small ribosomal subunit protein bS16.